Reading from the N-terminus, the 327-residue chain is MSSQFEQLKLLSVLVCDTGDPELVKSSGSQDATTNPSLILKVAQEPKYQEMLTEAIAWGIRQNGDDVQTLTFVLDKIQVNFGLEILKCIPGRVSLEIDARLSFNTEAMVQRAIFLSELFVASGGDKKRLLVKIPGTWEGIQAVEILEKQGISCNVTLIFNLIQAIAAAKAKATLISPFVGRIYDWWIAAYGDEGYSIDTDPGVASVSNIYTYYKKFDIPTQIMAASFRSKEQVLALAGCDLLTVSPKLLDELKKDQSSVTKKLDVAEAKKLDVQPVELTESVFRFLMNEDAMATEKLAEGIRIFSGDTQILEAAVTEFIKQIAAQDA.

The Schiff-base intermediate with substrate role is filled by Lys-132.

It belongs to the transaldolase family. Type 1 subfamily. Homodimer.

The protein localises to the cytoplasm. The catalysed reaction is D-sedoheptulose 7-phosphate + D-glyceraldehyde 3-phosphate = D-erythrose 4-phosphate + beta-D-fructose 6-phosphate. Its pathway is carbohydrate degradation; pentose phosphate pathway; D-glyceraldehyde 3-phosphate and beta-D-fructose 6-phosphate from D-ribose 5-phosphate and D-xylulose 5-phosphate (non-oxidative stage): step 2/3. In terms of biological role, transaldolase is important for the balance of metabolites in the pentose-phosphate pathway. The protein is Transaldolase of Chlamydia felis (strain Fe/C-56) (Chlamydophila felis).